The sequence spans 37 residues: Natriuretic peptide PNP (37 aa).

Cysteines 14 and 30 form a disulfide.

Expressed by the venom gland.

It is found in the secreted. Its function is as follows. Increases urine flow and decreases blood pressure when administered to rats by intravenous injection. Inhibits thrombin-induced platelet aggregation. Stimulates cGMP production via the natriuretic peptide receptor-A (NPR1). The sequence is that of Natriuretic peptide PNP from Pseudocerastes persicus (Persian horned viper).